A 287-amino-acid polypeptide reads, in one-letter code: Flagellin (287 aa).

This sequence belongs to the bacterial flagellin family.

The protein localises to the secreted. Its subcellular location is the bacterial flagellum. In terms of biological role, flagellin is the subunit protein which polymerizes to form the filaments of bacterial flagella. In Listeria innocua serovar 6a (strain ATCC BAA-680 / CLIP 11262), this protein is Flagellin (flaA).